We begin with the raw amino-acid sequence, 931 residues long: Protocadherin gamma-A5 (931 aa).

Residues 1 to 29 form the signal peptide; the sequence is MASPPRGWGCGELLLPFMLLGTLCEPGSG. 6 consecutive Cadherin domains span residues 30-133, 134-242, 243-347, 348-452, 453-562, and 570-683; these read QIRY…FPRF, RDEE…APLF, TPSE…APEV, ILTS…PPNF, PQAS…TPEI, and DGST…TPID. Residues 30 to 692 are Extracellular-facing; the sequence is QIRYSMPEEL…DPEDLDLTLY (663 aa). 2 N-linked (GlcNAc...) asparagine glycosylation sites follow: N419 and N545. A helical transmembrane segment spans residues 693–713; that stretch reads LVVAVAAVSCVFLAFVIVLLV. Residues 714–931 lie on the Cytoplasmic side of the membrane; it reads LRLRRWHKSR…KKKSGKKEKK (218 aa). Disordered stretches follow at residues 800-840 and 901-931; these read NKEE…WPNN and ATLT…KEKK. Positions 809-840 are enriched in polar residues; that stretch reads APPNTDWRFSQAQRPGTSGSQNGDDTGTWPNN. Basic residues predominate over residues 921–931; it reads NKKKSGKKEKK.

The protein localises to the cell membrane. In terms of biological role, potential calcium-dependent cell-adhesion protein. May be involved in the establishment and maintenance of specific neuronal connections in the brain. This chain is Protocadherin gamma-A5 (PCDHGA5), found in Homo sapiens (Human).